The primary structure comprises 180 residues: Signal peptidase complex subunit 3 (180 aa).

The Cytoplasmic portion of the chain corresponds to 1–12 (MHNLLSRANALL). The helical; Signal-anchor for type II membrane protein transmembrane segment at 13–33 (AFTLWVMAAVTAACFLSTVFL) threads the bilayer. Over 34–180 (DYTVPTKLTV…PTTYTTTRRS (147 aa)) the chain is Lumenal. Asn-141 carries N-linked (GlcNAc...) asparagine glycosylation.

It belongs to the SPCS3 family. In terms of assembly, component of the signal peptidase complex (SPC) composed of a catalytic subunit sec-11 and three accessory subunits spcs-1, spcs-2 and spcs-3. The complex induces a local thinning of the ER membrane which is used to measure the length of the signal peptide (SP) h-region of protein substrates. This ensures the selectivity of the complex towards h-regions shorter than 18-20 amino acids.

It is found in the endoplasmic reticulum membrane. Its function is as follows. Essential component of the signal peptidase complex (SPC) which catalyzes the cleavage of N-terminal signal sequences from nascent proteins as they are translocated into the lumen of the endoplasmic reticulum. Essential for the SPC catalytic activity, possibly by stabilizing and positioning the active center of the complex close to the lumenal surface. This Caenorhabditis elegans protein is Signal peptidase complex subunit 3.